We begin with the raw amino-acid sequence, 466 residues long: Citrate synthase, mitochondrial (466 aa).

Residues 1–27 constitute a mitochondrion transit peptide; it reads MALLTAAARLFGAKNASCLVLAARHAS. The SIFI-degron motif lies at 2–21; sequence ALLTAAARLFGAKNASCLVL. An N6-succinyllysine modification is found at Lys57. An N6-acetyllysine; alternate modification is found at Lys76. An N6-succinyllysine; alternate modification is found at Lys76. N6-succinyllysine occurs at positions 103 and 193. A Phosphoserine modification is found at Ser226. Residue His301 is part of the active site. Lys321 and Lys327 each carry N6-acetyllysine; alternate. Lys321 and Lys327 each carry N6-succinyllysine; alternate. His347 is an active-site residue. Residue Arg356 participates in oxaloacetate binding. The residue at position 375 (Lys375) is an N6-acetyllysine; alternate. Residue Lys375 is modified to N6-succinyllysine; alternate. Lys382 carries the N6-acetyllysine modification. Lys393 carries the N6-acetyllysine; alternate modification. Lys393 carries the post-translational modification N6-succinyllysine; alternate. Lys395 carries the post-translational modification N6,N6,N6-trimethyllysine. Asp402 is an active-site residue. Oxaloacetate-binding residues include Arg428 and Arg448. Lys450 bears the N6-succinyllysine mark. Lys459 is subject to N6-acetyllysine; alternate. Lys459 carries the N6-succinyllysine; alternate modification.

The protein belongs to the citrate synthase family. In terms of assembly, homodimer. In terms of processing, methylated. Trimethylation at Lys-395 by CSKMT decreases citrate synthase activity. Post-translationally, in response to mitochondrial stress, the precursor protein is ubiquitinated by the SIFI complex in the cytoplasm before mitochondrial import, leading to its degradation. Within the SIFI complex, UBR4 initiates ubiquitin chain that are further elongated or branched by KCMF1.

Its subcellular location is the mitochondrion matrix. It carries out the reaction oxaloacetate + acetyl-CoA + H2O = citrate + CoA + H(+). Its pathway is carbohydrate metabolism; tricarboxylic acid cycle; isocitrate from oxaloacetate: step 1/2. In terms of biological role, key enzyme of the Krebs tricarboxylic acid cycle which catalyzes the synthesis of citrate from acetyl coenzyme A and oxaloacetate. The polypeptide is Citrate synthase, mitochondrial (CS) (Bos taurus (Bovine)).